Here is a 235-residue protein sequence, read N- to C-terminus: Probable pyridoxal 5'-phosphate synthase subunit PDX1 (235 aa).

Lys16 serves as the catalytic Schiff-base intermediate with D-ribose 5-phosphate. Arg104 provides a ligand contact to D-glyceraldehyde 3-phosphate. Residues Gly153 and 174–175 (GS) each bind D-ribose 5-phosphate.

The protein belongs to the PdxS/SNZ family.

The catalysed reaction is aldehydo-D-ribose 5-phosphate + D-glyceraldehyde 3-phosphate + L-glutamine = pyridoxal 5'-phosphate + L-glutamate + phosphate + 3 H2O + H(+). It participates in cofactor biosynthesis; pyridoxal 5'-phosphate biosynthesis. Functionally, catalyzes the formation of pyridoxal 5'-phosphate from ribose 5-phosphate (RBP), glyceraldehyde 3-phosphate (G3P) and ammonia. The ammonia is provided by PDX2. Can also use ribulose 5-phosphate and dihydroxyacetone phosphate as substrates, resulting from enzyme-catalyzed isomerization of RBP and G3P, respectively. Also plays an indirect role in resistance to singlet oxygen-generating photosensitizers. In Stellaria longipes (Longstalk starwort), this protein is Probable pyridoxal 5'-phosphate synthase subunit PDX1.